The following is a 143-amino-acid chain: 16 kDa calcium-binding protein (143 aa).

EF-hand domains follow at residues 2–37 (SEEK…VGVC), 41–71 (ADKI…LPPR), 73–108 (KCVA…SGMD), and 109–143 (IDQN…QTYK). 19 residues coordinate Ca(2+): aspartate 15, aspartate 17, asparagine 19, glutamate 26, aspartate 49, asparagine 51, aspartate 53, lysine 55, glutamate 60, aspartate 86, aspartate 88, serine 90, lysine 92, glutamate 97, aspartate 122, asparagine 124, aspartate 126, glutamate 128, and glutamate 133.

In terms of tissue distribution, found in eggs.

Calcium-binding protein. This chain is 16 kDa calcium-binding protein, found in Schistosoma mansoni (Blood fluke).